A 256-amino-acid chain; its full sequence is Pimeloyl-[acyl-carrier protein] methyl ester esterase (256 aa).

The region spanning H15–P242 is the AB hydrolase-1 domain. Substrate is bound by residues W22, S82–L83, and F143–Q147. The active-site Nucleophile is S82. Catalysis depends on residues D207 and H235. H235 contacts substrate.

It belongs to the AB hydrolase superfamily. Carboxylesterase BioH family. Monomer.

It localises to the cytoplasm. It catalyses the reaction 6-carboxyhexanoyl-[ACP] methyl ester + H2O = 6-carboxyhexanoyl-[ACP] + methanol + H(+). The protein operates within cofactor biosynthesis; biotin biosynthesis. Its function is as follows. The physiological role of BioH is to remove the methyl group introduced by BioC when the pimeloyl moiety is complete. It allows to synthesize pimeloyl-ACP via the fatty acid synthetic pathway through the hydrolysis of the ester bonds of pimeloyl-ACP esters. The sequence is that of Pimeloyl-[acyl-carrier protein] methyl ester esterase from Escherichia coli O45:K1 (strain S88 / ExPEC).